The sequence spans 588 residues: Transcription factor tau 60 kDa subunit (588 aa).

The tract at residues 399 to 588 is sufficient for SPT15-binding; sequence LPKLPENFSM…VYCGTTLEVM (190 aa).

Heterodimer with TFC6. Component of the TFIIIC complex composed of TFC1, TFC3, TFC4, TFC6, TFC7 and TFC8. The subunits are organized in two globular domains, tauA and tauB, connected by a proteolysis-sensitive and flexible linker. Interacts with SPT15 and directly with TFC6.

The protein localises to the nucleus. In terms of biological role, TFIIIC mediates tRNA and 5S RNA gene activation by binding to intragenic promoter elements. Upstream of the transcription start site, TFIIIC assembles the initiation complex TFIIIB-TFIIIC-tDNA, which is sufficient for RNA polymerase III recruitment and function. Part of the tauB domain of TFIIIC that binds boxB DNA promoter sites of tRNA and similar genes. Plays a role in TFIIB assembly through its interaction with SPT15/TBP. Essential for cell viability. In Saccharomyces cerevisiae (strain ATCC 204508 / S288c) (Baker's yeast), this protein is Transcription factor tau 60 kDa subunit (TFC8).